The sequence spans 250 residues: Kallikrein-9 (250 aa).

A signal peptide spans 1–15 (MKLGLLCALLSLLAG). The Peptidase S1 domain occupies 23–249 (AIGAEECRPN…YLDWIQEIME (227 aa)). 6 cysteine pairs are disulfide-bonded: cysteine 29/cysteine 164, cysteine 48/cysteine 64, cysteine 136/cysteine 238, cysteine 143/cysteine 210, cysteine 175/cysteine 189, and cysteine 200/cysteine 225. Active-site charge relay system residues include histidine 63 and aspartate 111. Asparagine 131 and asparagine 166 each carry an N-linked (GlcNAc...) asparagine glycan. Serine 204 serves as the catalytic Charge relay system. A glycan (N-linked (GlcNAc...) asparagine) is linked at asparagine 211.

It belongs to the peptidase S1 family. Kallikrein subfamily. As to expression, skin, thymus, trachea, cerebellum and spinal cord.

The protein localises to the secreted. This is Kallikrein-9 (KLK9) from Homo sapiens (Human).